Reading from the N-terminus, the 144-residue chain is Large ribosomal subunit protein uL14 (144 aa).

This sequence belongs to the universal ribosomal protein uL14 family. As to quaternary structure, part of the 50S ribosomal subunit. Forms a cluster with proteins L3 and L24e, part of which may contact the 16S rRNA in 2 intersubunit bridges.

In terms of biological role, binds to 23S rRNA. Forms part of two intersubunit bridges in the 70S ribosome. The sequence is that of Large ribosomal subunit protein uL14 from Caldivirga maquilingensis (strain ATCC 700844 / DSM 13496 / JCM 10307 / IC-167).